The chain runs to 581 residues: Proline--tRNA ligase (581 aa).

It belongs to the class-II aminoacyl-tRNA synthetase family. ProS type 1 subfamily. In terms of assembly, homodimer.

It localises to the cytoplasm. It catalyses the reaction tRNA(Pro) + L-proline + ATP = L-prolyl-tRNA(Pro) + AMP + diphosphate. Functionally, catalyzes the attachment of proline to tRNA(Pro) in a two-step reaction: proline is first activated by ATP to form Pro-AMP and then transferred to the acceptor end of tRNA(Pro). As ProRS can inadvertently accommodate and process non-cognate amino acids such as alanine and cysteine, to avoid such errors it has two additional distinct editing activities against alanine. One activity is designated as 'pretransfer' editing and involves the tRNA(Pro)-independent hydrolysis of activated Ala-AMP. The other activity is designated 'posttransfer' editing and involves deacylation of mischarged Ala-tRNA(Pro). The misacylated Cys-tRNA(Pro) is not edited by ProRS. This chain is Proline--tRNA ligase, found in Kosmotoga olearia (strain ATCC BAA-1733 / DSM 21960 / TBF 19.5.1).